Reading from the N-terminus, the 607-residue chain is Developmental gene 1062 protein (607 aa).

Disordered stretches follow at residues 62–84 (LQGQQQQQQQQQQNHSQQQHNNQ), 334–451 (ICDD…SNFQ), and 568–602 (DNNTQSQMNNSISVNNHHHHHHHQPNNSNLTNDLL). Residues 334-363 (ICDDSSNSSTPSLSSYSNGNNKYNNNNNDS) are compositionally biased toward low complexity. A compositionally biased stretch (acidic residues) spans 364–382 (SESDESDDDDNNDDDDNDS). 2 stretches are compositionally biased toward low complexity: residues 383–451 (IDFN…SNFQ) and 568–582 (DNNTQSQMNNSISVN).

In Dictyostelium discoideum (Social amoeba), this protein is Developmental gene 1062 protein (DG1062).